The sequence spans 478 residues: Keratin, type II cytoskeletal 8 (478 aa).

A head region spans residues 1 to 97 (MSIRVTQKSY…DPNIQAVRTQ (97 aa)). Residue S9 is modified to Phosphoserine; by PKC/PRKCE. K11 participates in a covalent cross-link: Glycyl lysine isopeptide (Lys-Gly) (interchain with G-Cter in SUMO2). 4 positions are modified to phosphoserine: S13, S15, S21, and S22. A disordered region spans residues 16–44 (APRSFSSRSYTSGPGSRISSSAFSRVGSS). R23 carries the omega-N-methylarginine modification. At S24 the chain carries Phosphoserine; by PKC/PRKCE. T26 carries the phosphothreonine modification. A phosphoserine mark is found at S27 and S31. Residue R32 is modified to Omega-N-methylarginine. Phosphoserine is present on residues S34 and S39. R40 bears the Omega-N-methylarginine mark. Residues S43 and S44 each carry the phosphoserine modification. R48 carries the asymmetric dimethylarginine; alternate modification. Residue R48 is modified to Omega-N-methylarginine; alternate. At S81 the chain carries Phosphoserine; by MAPK. The interval 98 to 133 (EKEQIKTLNNKFASFIDKVRHLEQQNKVLETKWNLL) is coil 1A. Residues 98–409 (EKEQIKTLNN…KLLEGEESRL (312 aa)) enclose the IF rod domain. K108 carries the post-translational modification N6-malonyllysine. Glycyl lysine isopeptide (Lys-Gly) (interchain with G-Cter in SUMO2) cross-links involve residues K129 and K137. The interval 134–150 (QQQKTARSNIDNMFESY) is linker 1. The segment at 151 to 242 (INNLRRQLET…QLYEEEIREM (92 aa)) is coil 1B. K204 is covalently cross-linked (Glycyl lysine isopeptide (Lys-Gly) (interchain with G-Cter in SUMO1); alternate). Residue K204 forms a Glycyl lysine isopeptide (Lys-Gly) (interchain with G-Cter in SUMO2); alternate linkage. K214 carries the N6-acetyllysine modification. Position 235 is a phosphotyrosine (Y235). A linker 12 region spans residues 243-266 (QSQISDTSVVLEMDNNRNLDLDGI). The tract at residues 267–405 (IAEVKAQYEE…ATYRKLLEGE (139 aa)) is coil 2. A necessary for interaction with PNN region spans residues 268-389 (AEVKAQYEEI…EYQELMNVKL (122 aa)). K271 participates in a covalent cross-link: Glycyl lysine isopeptide (Lys-Gly) (interchain with G-Cter in SUMO2). A Phosphoserine modification is found at S281. A Glycyl lysine isopeptide (Lys-Gly) (interchain with G-Cter in SUMO2) cross-link involves residue K292. A Glycyl lysine isopeptide (Lys-Gly) (interchain with G-Cter in SUMO2); alternate cross-link involves residue K302. K302 bears the N6-acetyllysine; alternate mark. Residue K311 forms a Glycyl lysine isopeptide (Lys-Gly) (interchain with G-Cter in SUMO2) linkage. K332 is covalently cross-linked (Glycyl lysine isopeptide (Lys-Gly) (interchain with G-Cter in SUMO2); alternate). K332 bears the N6-acetyllysine; alternate mark. Position 337 is a phosphoserine (S337). K400 participates in a covalent cross-link: Glycyl lysine isopeptide (Lys-Gly) (interchain with G-Cter in SUMO2). The tract at residues 406 to 478 (ESRLESGMQN…VSESSDVLSK (73 aa)) is tail. S407, S411, S417, S424, and S433 each carry phosphoserine. K467 is covalently cross-linked (Glycyl lysine isopeptide (Lys-Gly) (interchain with G-Cter in SUMO1); alternate). K467 participates in a covalent cross-link: Glycyl lysine isopeptide (Lys-Gly) (interchain with G-Cter in SUMO2); alternate. Residues S470, S472, S473, and S477 each carry the phosphoserine modification.

The protein belongs to the intermediate filament family. Heterotetramer of two type I and two type II keratins. Forms a heterodimer with KRT18. Associates with KRT20. Interacts with PNN. When associated with KRT19, interacts with DMD. Interacts with TCHP. Interacts with APEX1. Interacts with GPER1. Interacts with EPPK1. Interacts with PKP1 and PKP2. Post-translationally, O-glycosylated. O-GlcNAcylation at multiple sites increases solubility, and decreases stability by inducing proteasomal degradation. In terms of processing, O-glycosylated (O-GlcNAcylated), in a cell cycle-dependent manner. Expressed in bladder, liver, exocervix and (in very low amounts) esophagus.

The protein localises to the cytoplasm. It is found in the nucleus. The protein resides in the nucleoplasm. It localises to the nucleus matrix. Its function is as follows. Together with KRT19, helps to link the contractile apparatus to dystrophin at the costameres of striated muscle. The polypeptide is Keratin, type II cytoskeletal 8 (KRT8) (Bos taurus (Bovine)).